Here is a 285-residue protein sequence, read N- to C-terminus: Geranyl diphosphate 2-C-methyltransferase (285 aa).

This sequence belongs to the geranyl diphosphate 2-C-methyltransferase family. It depends on Mg(2+) as a cofactor.

The catalysed reaction is (2E)-geranyl diphosphate + S-adenosyl-L-methionine = (E)-2-methylgeranyl diphosphate + S-adenosyl-L-homocysteine + H(+). In terms of biological role, catalyzes the SAM-dependent methylation of geranyl diphosphate (GPP) to yield (E)-2-methylgeranyl diphosphate (2-MeGPP). The sequence is that of Geranyl diphosphate 2-C-methyltransferase from Saccharopolyspora erythraea (strain ATCC 11635 / DSM 40517 / JCM 4748 / NBRC 13426 / NCIMB 8594 / NRRL 2338).